Consider the following 209-residue polypeptide: Uracil phosphoribosyltransferase (209 aa).

5-phospho-alpha-D-ribose 1-diphosphate is bound by residues Arg-79, Arg-104, and 131 to 139; that span reads DPMLATGGS. Uracil-binding positions include Ile-194 and 199–201; that span reads GDA. Asp-200 contributes to the 5-phospho-alpha-D-ribose 1-diphosphate binding site.

Belongs to the UPRTase family. The cofactor is Mg(2+).

It catalyses the reaction UMP + diphosphate = 5-phospho-alpha-D-ribose 1-diphosphate + uracil. The protein operates within pyrimidine metabolism; UMP biosynthesis via salvage pathway; UMP from uracil: step 1/1. With respect to regulation, allosterically activated by GTP. Functionally, catalyzes the conversion of uracil and 5-phospho-alpha-D-ribose 1-diphosphate (PRPP) to UMP and diphosphate. This is Uracil phosphoribosyltransferase from Alkaliphilus metalliredigens (strain QYMF).